The primary structure comprises 205 residues: Ephrin-A1 (205 aa).

The N-terminal stretch at 1 to 18 (MEFLWAPLLGLCCSLAAA) is a signal peptide. The region spanning 19 to 151 (DRHTVFWNSS…RLKVTVSGKI (133 aa)) is the Ephrin RBD domain. Asn26 carries an N-linked (GlcNAc...) asparagine glycan. Cystine bridges form between Cys51–Cys92 and Cys80–Cys140. A lipid anchor (GPI-anchor amidated serine) is attached at Ser182. The propeptide at 183-205 (AAPRLFPLAWTVLLLPLLLLQTP) is removed in mature form.

It belongs to the ephrin family. As to quaternary structure, monomer. Homodimer. Forms heterodimers with EPHA2. Binds to the receptor tyrosine kinases EPHA2, EPHA3, EPHA4, EPHA5, EPHA6 and EPHA7. Also binds with low affinity to EPHA1. Undergoes proteolysis by a metalloprotease to give rise to a soluble monomeric form. Post-translationally, N-Glycosylation is required for binding to EPHA2 receptor and inducing its internalization. In terms of tissue distribution, brain. Down-regulated in primary glioma tissues compared to the normal tissues. The soluble monomeric form is expressed in the glioblastoma multiforme (GBM) and breast cancer cells (at protein level).

Its subcellular location is the cell membrane. The protein resides in the secreted. Functionally, cell surface GPI-bound ligand for Eph receptors, a family of receptor tyrosine kinases which are crucial for migration, repulsion and adhesion during neuronal, vascular and epithelial development. Binds promiscuously Eph receptors residing on adjacent cells, leading to contact-dependent bidirectional signaling into neighboring cells. Plays an important role in angiogenesis and tumor neovascularization. The recruitment of VAV2, VAV3 and PI3-kinase p85 subunit by phosphorylated EPHA2 is critical for EFNA1-induced RAC1 GTPase activation and vascular endothelial cell migration and assembly. Exerts anti-oncogenic effects in tumor cells through activation and down-regulation of EPHA2. Activates EPHA2 by inducing tyrosine phosphorylation which leads to its internalization and degradation. Acts as a negative regulator in the tumorigenesis of gliomas by down-regulating EPHA2 and FAK. Can evoke collapse of embryonic neuronal growth cone and regulates dendritic spine morphogenesis. The chain is Ephrin-A1 (EFNA1) from Homo sapiens (Human).